A 255-amino-acid chain; its full sequence is Imidazole glycerol phosphate synthase subunit HisF (255 aa).

Residues Asp11 and Asp130 contribute to the active site.

Belongs to the HisA/HisF family. As to quaternary structure, heterodimer of HisH and HisF.

Its subcellular location is the cytoplasm. The catalysed reaction is 5-[(5-phospho-1-deoxy-D-ribulos-1-ylimino)methylamino]-1-(5-phospho-beta-D-ribosyl)imidazole-4-carboxamide + L-glutamine = D-erythro-1-(imidazol-4-yl)glycerol 3-phosphate + 5-amino-1-(5-phospho-beta-D-ribosyl)imidazole-4-carboxamide + L-glutamate + H(+). It functions in the pathway amino-acid biosynthesis; L-histidine biosynthesis; L-histidine from 5-phospho-alpha-D-ribose 1-diphosphate: step 5/9. Its function is as follows. IGPS catalyzes the conversion of PRFAR and glutamine to IGP, AICAR and glutamate. The HisF subunit catalyzes the cyclization activity that produces IGP and AICAR from PRFAR using the ammonia provided by the HisH subunit. The protein is Imidazole glycerol phosphate synthase subunit HisF of Rhodopseudomonas palustris (strain BisA53).